A 624-amino-acid chain; its full sequence is RQC trigger complex subunit CUE3 (624 aa).

Residues 316–359 (VNEEQLSALMELFPQFSKYQLSQTLLAYDNNIELVTNKIFEDPT) enclose the CUE domain. Disordered stretches follow at residues 366–390 (REPA…ELSI), 435–469 (RDDT…DDSN), and 546–624 (SKTG…NNAI). Ser377 carries the post-translational modification Phosphoserine. Composition is skewed to basic and acidic residues over residues 443 to 455 (DVNR…RIGL) and 568 to 589 (EQAK…TEQK). The segment covering 590 to 617 (KRQHAKNEKRKGARANHNRKKGHDKKLA) has biased composition (basic residues).

In terms of assembly, component of the RQT (ribosome quality control trigger) complex, composed of SLH1, CUE3, and RQT4. Interacts with ubiquitin; the interaction is direct. Interacts with SLH1. Interacts with RQT4. Interacts with HEL2. Associates with translating ribosomes.

The protein localises to the cytoplasm. In terms of biological role, involved in activation of the ribosome quality control (RQC) pathway, a pathway that degrades nascent peptide chains during problematic translation. Specifically recognizes and binds RPS20/uS10 ubiquitinated by HEL2, promoting recruitment of the RQT (ribosome quality control trigger) complex on stalled ribosomes, followed by disassembly of stalled ribosomes. The protein is RQC trigger complex subunit CUE3 (CUE3) of Saccharomyces cerevisiae (strain ATCC 204508 / S288c) (Baker's yeast).